A 381-amino-acid polypeptide reads, in one-letter code: Fe-S cluster assembly protein DRE2 (381 aa).

The segment at 8–165 is N-terminal SAM-like domain; the sequence is AQGSGRFLLL…KPDFGAQQAV (158 aa). The disordered stretch occupies residues 100–134; that stretch reads RNRDNQIWGSGSDSAAGLGSSDGDGGGGEKMSSSE. A compositionally biased stretch (low complexity) spans 108–118; sequence GSGSDSAAGLG. Residues 119–128 are compositionally biased toward gly residues; sequence SSDGDGGGGE. Positions 166-273 are linker; the sequence is PLKLGRKKNL…EEELLGEYDM (108 aa). 4 residues coordinate [2Fe-2S] cluster: Cys-283, Cys-294, Cys-297, and Cys-299. Positions 283-299 are fe-S binding site A; it reads CRPKAGKRRRACKDCTC. The [4Fe-4S] cluster site is built by Cys-344, Cys-347, Cys-355, and Cys-358. Short sequence motifs (cx2C motif) lie at residues 344-347 and 355-358; these read CGNC and CDGC. The segment at 344–358 is fe-S binding site B; it reads CGNCALGDAFRCDGC.

The protein belongs to the anamorsin family. Monomer. Interacts with TAH18. Interacts with MIA40. [2Fe-2S] cluster serves as cofactor. Requires [4Fe-4S] cluster as cofactor.

The protein resides in the cytoplasm. Its subcellular location is the mitochondrion intermembrane space. Functionally, component of the cytosolic iron-sulfur (Fe-S) protein assembly (CIA) machinery required for the maturation of extramitochondrial Fe-S proteins. Part of an electron transfer chain functioning in an early step of cytosolic Fe-S biogenesis, facilitating the de novo assembly of a [4Fe-4S] cluster on the scaffold complex CFD1-NBP35. Electrons are transferred to DRE2 from NADPH via the FAD- and FMN-containing protein TAH18. TAH18-DRE2 are also required for the assembly of the diferric tyrosyl radical cofactor of ribonucleotide reductase (RNR), probably by providing electrons for reduction during radical cofactor maturation in the catalytic small subunit RNR2. In Paracoccidioides brasiliensis (strain Pb18), this protein is Fe-S cluster assembly protein DRE2.